Consider the following 285-residue polypeptide: HTH-type transcriptional regulator YofA (285 aa).

The HTH lysR-type domain maps to 1–58; sequence MESGDLKIFQAVAREGSITKAAQMLNYVQSNVTARVHNLEEDLNIRLFHRTNRGMKLT. Positions 18–37 form a DNA-binding region, H-T-H motif; sequence ITKAAQMLNYVQSNVTARVH.

Belongs to the LysR transcriptional regulatory family.

The protein resides in the cytoplasm. Regulates expression of the cell division protein ftsW, and is essential for cell viability during stationary phase. This is HTH-type transcriptional regulator YofA (yofA) from Bacillus subtilis (strain 168).